The chain runs to 421 residues: Imidazolonepropionase (421 aa).

Residues H81 and H83 each contribute to the Fe(3+) site. Positions 81 and 83 each coordinate Zn(2+). 4-imidazolone-5-propanoate contacts are provided by R90, Y153, and H186. Y153 is a binding site for N-formimidoyl-L-glutamate. H251 is a binding site for Fe(3+). H251 contributes to the Zn(2+) binding site. Residue E254 coordinates 4-imidazolone-5-propanoate. A Fe(3+)-binding site is contributed by D326. D326 is a binding site for Zn(2+). 2 residues coordinate N-formimidoyl-L-glutamate: N328 and G330. A 4-imidazolone-5-propanoate-binding site is contributed by S331.

The protein belongs to the metallo-dependent hydrolases superfamily. HutI family. Zn(2+) is required as a cofactor. The cofactor is Fe(3+).

It is found in the cytoplasm. It catalyses the reaction 4-imidazolone-5-propanoate + H2O = N-formimidoyl-L-glutamate. Its pathway is amino-acid degradation; L-histidine degradation into L-glutamate; N-formimidoyl-L-glutamate from L-histidine: step 3/3. Functionally, catalyzes the hydrolytic cleavage of the carbon-nitrogen bond in imidazolone-5-propanoate to yield N-formimidoyl-L-glutamate. It is the third step in the universal histidine degradation pathway. In Streptococcus pyogenes serotype M3 (strain SSI-1), this protein is Imidazolonepropionase.